A 265-amino-acid polypeptide reads, in one-letter code: Energy-coupling factor transporter transmembrane protein EcfT (265 aa).

The next 5 membrane-spanning stretches (helical) occupy residues 29–49 (IILF…AILI), 73–93 (VWIL…GGTV), 110–130 (AIFI…LTLT), 143–163 (LLGP…MMSI), and 242–262 (FTWR…VIGW).

It belongs to the energy-coupling factor EcfT family. Forms a stable energy-coupling factor (ECF) transporter complex composed of 2 membrane-embedded substrate-binding proteins (S component), 2 ATP-binding proteins (A component) and 2 transmembrane proteins (T component). May be able to interact with more than 1 S component at a time.

The protein resides in the cell membrane. Functionally, transmembrane (T) component of an energy-coupling factor (ECF) ABC-transporter complex. Unlike classic ABC transporters this ECF transporter provides the energy necessary to transport a number of different substrates. The polypeptide is Energy-coupling factor transporter transmembrane protein EcfT (Brevibacillus brevis (strain 47 / JCM 6285 / NBRC 100599)).